Consider the following 311-residue polypeptide: Cytosolic Fe-S cluster assembly factor Nubp1 homolog (311 aa).

The [4Fe-4S] cluster site is built by Cys9, Cys23, Cys26, and Cys32. ATP is bound at residue 63–70 (GKGGVGKS). [4Fe-4S] cluster is bound by residues Cys240 and Cys243.

This sequence belongs to the Mrp/NBP35 ATP-binding proteins family. NUBP1/NBP35 subfamily. Heterotetramer of 2 Nubp1 and 2 Nubp2 chains. [4Fe-4S] cluster is required as a cofactor.

The protein resides in the cytoplasm. In terms of biological role, component of the cytosolic iron-sulfur (Fe/S) protein assembly (CIA) machinery. Required for maturation of extramitochondrial Fe-S proteins. The Nubp1-Nubp2 heterotetramer forms a Fe-S scaffold complex, mediating the de novo assembly of an Fe-S cluster and its transfer to target apoproteins. The polypeptide is Cytosolic Fe-S cluster assembly factor Nubp1 homolog (Drosophila erecta (Fruit fly)).